The chain runs to 519 residues: Amphoterin-induced protein 2 (519 aa).

Positions 1–38 are cleaved as a signal peptide; sequence MSLRFHTLPTLPRAVKPGCRELLCLLVIAVMVSPSASG. Residues 39-67 form the LRRNT domain; it reads MCPTACICATDIVSCTNKNLSKVPGNLFR. Over 39 to 397 the chain is Extracellular; the sequence is MCPTACICAT…RSHAHEAFNT (359 aa). Disulfide bonds link Cys-40-Cys-46 and Cys-44-Cys-53. The N-linked (GlcNAc...) asparagine glycan is linked to Asn-57. 6 LRR repeats span residues 68–89, 93–114, 117–138, 141–162, 165–186, and 192–213; these read LIKR…WIPV, KLST…SFST, NLKC…TFQE, ALEV…AFGG, HLQK…LYTG, and DLTF…HINL. Asn-103 carries an N-linked (GlcNAc...) asparagine glycan. The LRRCT domain occupies 227-283; sequence NPFVCDCSLYSLLIFWYRRHFSSVMDFKNDYTCRLWSDSRHSHQLQLLQESFLNCSY. Cystine bridges form between Cys-231–Cys-259 and Cys-233–Cys-281. N-linked (GlcNAc...) asparagine glycans are attached at residues Asn-280, Asn-287, Asn-344, Asn-372, Asn-380, Asn-383, and Asn-387. Positions 288-378 constitute an Ig-like C2-type domain; sequence GSFHALGFIH…RLLNETVDIM (91 aa). A disulfide bridge links Cys-309 with Cys-362. A helical transmembrane segment spans residues 398–418; that stretch reads AFTTLAACVASIVLVLLYLYL. At 419 to 519 the chain is on the cytoplasmic side; it reads TPCPCKCKAK…FSDTPFVAST (101 aa). A disordered region spans residues 498-519; the sequence is RAKSDSDSVNSVFSDTPFVAST.

It belongs to the immunoglobulin superfamily. AMIGO family. As to quaternary structure, binds itself as well as AMIGO1 and AMIGO3. As to expression, highest level in cerebellum, retina, liver, and lung. Lower levels in cerebrum, kidney, small intestine, spleen and testis.

It localises to the cell membrane. The protein localises to the nucleus. Functionally, required for depolarization-dependent survival of cultured cerebellar granule neurons. May mediate homophilic as well as heterophilic cell-cell interaction with AMIGO1 or AMIGO3. May contribute to signal transduction through its intracellular domain. This Mus musculus (Mouse) protein is Amphoterin-induced protein 2.